The sequence spans 504 residues: MEELQSFLEKDRSWXQHFLYPLLFQEYIYVFAHDHGLNGSIFYEPVNFLGYDKKSSAVLVKRLIIRMYQQNHLICSFNESNRNRFVGHNYYSYFYSLMISEGVSLIVEIPFSLQLKSSIEEIHNLRSIHSIFPFLEDKLSXLNYLXDILIPHPIHMXILVQILQSRSPDAPSLHFLRLFLHQYHNWNSLITPKKSISVISKENKRLFXXLYNSYISECEFLLVFLRKQSSYLPLTSSGVFLERTYYYGKIQRILVWQNFFQKTLWVFKDPXMHYVRYQGKVILGSKGTNFLMKKWKFYFVNLWQYYFHFWSQPCRIHINQLSNYSFYFLGYFSNVLKNPLSVRNQMLENSFLMDTLTKKFDTLVPVIPLISSLSKAKFCTVSGHPISKPIWTDLSDCDIINRFGRICRNLSHYHSGSSKKQSLYRIKYILRLSCARTLARKHKSTVRIFMQRVSSGLLEEFFTEEERVLSLIFPQTTFFSLRGSQRERIWYLDIIRINDLVTNF.

This sequence belongs to the intron maturase 2 family. MatK subfamily.

It localises to the plastid. The protein localises to the chloroplast. Usually encoded in the trnK tRNA gene intron. Probably assists in splicing its own and other chloroplast group II introns. The protein is Maturase K of Eichhornia crassipes (Water hyacinth).